The chain runs to 96 residues: Co-chaperonin GroES (96 aa).

This sequence belongs to the GroES chaperonin family. As to quaternary structure, heptamer of 7 subunits arranged in a ring. Interacts with the chaperonin GroEL.

It is found in the cytoplasm. In terms of biological role, together with the chaperonin GroEL, plays an essential role in assisting protein folding. The GroEL-GroES system forms a nano-cage that allows encapsulation of the non-native substrate proteins and provides a physical environment optimized to promote and accelerate protein folding. GroES binds to the apical surface of the GroEL ring, thereby capping the opening of the GroEL channel. The sequence is that of Co-chaperonin GroES from Polynucleobacter asymbioticus (strain DSM 18221 / CIP 109841 / QLW-P1DMWA-1) (Polynucleobacter necessarius subsp. asymbioticus).